A 147-amino-acid chain; its full sequence is Hemoglobin subunit epsilon-Y2 (147 aa).

Residues 3-147 form the Globin domain; sequence NFTAEEKTLI…VATALSHKYH (145 aa). Ser51 carries the phosphoserine modification. Residues His64 and His93 each contribute to the heme b site.

The protein belongs to the globin family. High expression in yolk sac blood islands, fetal liver, and embryonic erythrocytes. Very low levels in adult liver and spleen.

Functionally, hemoglobin epsilon chain is a beta-type chain found in early embryos. The polypeptide is Hemoglobin subunit epsilon-Y2 (Hbb-y) (Mus musculus (Mouse)).